Here is a 524-residue protein sequence, read N- to C-terminus: uncharacterized protein (524 aa).

Residues 1–65 (MSDPFFTRPE…IDEENEDTYE (65 aa)) form a disordered region. A compositionally biased stretch (basic and acidic residues) spans 21-32 (SKREKENQKLER). The segment covering 51–64 (GFEDEIDEENEDTY) has biased composition (acidic residues). WD repeat units follow at residues 131–176 (IETA…DTEN), 206–245 (DHVK…PQHC), 248–287 (HHRD…YIET), 290–329 (GHQD…QLVF), 342–380 (YMEG…PLFT), 409–448 (PQPR…RSFE), and 457–503 (SVYG…PNSG).

The protein localises to the nucleus. This is an uncharacterized protein from Schizosaccharomyces pombe (strain 972 / ATCC 24843) (Fission yeast).